The primary structure comprises 121 residues: LHHQIIPVLSQHQTPTHALQSHHHIPVMATQQPTQPPQPMMPMPGQHSVTPTQHHQSNLPQPGQQPFQPQFPQKPTHRPIQPQAPVHPMPPMPQPQLPPMFPLQPLPPLLPDLPLEPWPAS.

Positions 1–121 (LHHQIIPVLS…DLPLEPWPAS (121 aa)) are disordered. 2 stretches are compositionally biased toward polar residues: residues 10-19 (SQHQTPTHAL) and 47-59 (HSVT…QSNL). Positions 60 to 84 (PQPGQQPFQPQFPQKPTHRPIQPQA) are enriched in low complexity. Positions 85-121 (PVHPMPPMPQPQLPPMFPLQPLPPLLPDLPLEPWPAS) are enriched in pro residues.

The protein belongs to the amelogenin family.

It is found in the secreted. Its subcellular location is the extracellular space. It localises to the extracellular matrix. Plays a role in the biomineralization of teeth. Seems to regulate the formation of crystallites during the secretory stage of tooth enamel development. Thought to play a major role in the structural organization and mineralization of developing enamel. The sequence is that of Amelogenin (AMEL) from Tachyglossus aculeatus aculeatus (Southeast Australian short-beaked echidna).